A 391-amino-acid polypeptide reads, in one-letter code: FLUCTUATING-LIGHT-ACCLIMATION protein 1, chloroplastic (391 aa).

Residues Met1 to Ser48 constitute a chloroplast transit peptide. The helical transmembrane segment at Ala87–Ala107 threads the bilayer. Residues Ser116–Ser138 show a composition bias toward low complexity. The segment at Ser116–Pro140 is disordered. 2 helical membrane-spanning segments follow: residues Phe168 to Leu188 and Tyr321 to Gly341.

The protein belongs to the FLAP family.

The protein resides in the plastid. The protein localises to the chloroplast thylakoid membrane. It is found in the chloroplast membrane. Its subcellular location is the chloroplast envelope. Its function is as follows. Monitors proton H(+) homeostasis in chloroplasts to manipulate luminal acidification levels appropriately to balance photoprotection and photochemical processes. Required during acclimation response to fluctuating light (e.g. photosynthetic activity optimization) by controlling non-photochemical quenching (NPQ); acts independently from DLDG1. This Arabidopsis thaliana (Mouse-ear cress) protein is FLUCTUATING-LIGHT-ACCLIMATION protein 1, chloroplastic.